We begin with the raw amino-acid sequence, 415 residues long: uncharacterized protein (415 aa).

This is an uncharacterized protein from Methanocaldococcus jannaschii (strain ATCC 43067 / DSM 2661 / JAL-1 / JCM 10045 / NBRC 100440) (Methanococcus jannaschii).